Here is a 37-residue protein sequence, read N- to C-terminus: Large ribosomal subunit protein bL36 (37 aa).

Belongs to the bacterial ribosomal protein bL36 family.

This Nitratiruptor sp. (strain SB155-2) protein is Large ribosomal subunit protein bL36.